Here is a 293-residue protein sequence, read N- to C-terminus: Elongation factor Ts (293 aa).

Residues 79–82 (TDFV) form an involved in Mg(2+) ion dislocation from EF-Tu region. Residue S149 is modified to Phosphoserine.

It belongs to the EF-Ts family.

The protein resides in the cytoplasm. Its function is as follows. Associates with the EF-Tu.GDP complex and induces the exchange of GDP to GTP. It remains bound to the aminoacyl-tRNA.EF-Tu.GTP complex up to the GTP hydrolysis stage on the ribosome. The chain is Elongation factor Ts (tsf) from Bacillus subtilis (strain 168).